The primary structure comprises 449 residues: MKFTQRLSLRVRLTLIFLILASVTWLLSSFVAWKQTTDNVDELFDTQLMLFAKRLSTLDLNEINAADRMAQTPNRLKHGHVDDDALTFAIFTHDGRMVLNDGDNGEDIPYSYQREGFADGQLVGEDDPWRFVWMTSPDGKYRIVVGQEWEYREDMALAIVAGQLIPWLVALPIMLIIMMVLLGRELAPLNKLALALRMRDPDSEKPLNATGVPSEVRPLVESLNQLFARTHAMMVRERRFTSDAAHELRSPLTALKVQTEVAQLSDDDPQARKKALLQLHSGIDRATRLVDQLLTLSRLDSLDNLQDVAEIPLEDLLQSSVMDIYHTAQQAKIDVRLTLNAHSIKRTGQPLLLSLLVRNLLDNAVRYSPQGSVVDVTLNADNFIVRDNGPGVTPEALARIGERFYRPPGQTATGSGLGLSIVQRIAKLHGMNVEFGNAEQGGFEAKVSW.

The Cytoplasmic segment spans residues 1 to 12; sequence MKFTQRLSLRVR. Residues 13-33 traverse the membrane as a helical segment; it reads LTLIFLILASVTWLLSSFVAW. Residues 34-156 are Periplasmic-facing; the sequence is KQTTDNVDEL…QEWEYREDMA (123 aa). The chain crosses the membrane as a helical span at residues 157–177; that stretch reads LAIVAGQLIPWLVALPIMLII. Over 178-449 the chain is Cytoplasmic; that stretch reads MMVLLGRELA…QGGFEAKVSW (272 aa). In terms of domain architecture, Histidine kinase spans 243-449; it reads DAAHELRSPL…QGGFEAKVSW (207 aa). H246 is subject to Phosphohistidine; by autocatalysis.

The protein localises to the cell inner membrane. It catalyses the reaction ATP + protein L-histidine = ADP + protein N-phospho-L-histidine.. Functionally, member of a two-component regulatory system QseB/QseC. Activates the flagella regulon by activating transcription of FlhDC. May activate QseB by phosphorylation. The polypeptide is Sensor protein QseC (qseC) (Escherichia coli (strain K12)).